The chain runs to 251 residues: Triosephosphate isomerase (251 aa).

Substrate is bound at residue Asn9 to Lys11. His96 acts as the Electrophile in catalysis. Glu167 serves as the catalytic Proton acceptor. Substrate is bound by residues Gly173, Ser213, and Gly234–Gly235.

It belongs to the triosephosphate isomerase family. As to quaternary structure, homodimer.

Its subcellular location is the cytoplasm. The catalysed reaction is D-glyceraldehyde 3-phosphate = dihydroxyacetone phosphate. Its pathway is carbohydrate biosynthesis; gluconeogenesis. It participates in carbohydrate degradation; glycolysis; D-glyceraldehyde 3-phosphate from glycerone phosphate: step 1/1. Its function is as follows. Involved in the gluconeogenesis. Catalyzes stereospecifically the conversion of dihydroxyacetone phosphate (DHAP) to D-glyceraldehyde-3-phosphate (G3P). This chain is Triosephosphate isomerase, found in Bacteroides fragilis (strain ATCC 25285 / DSM 2151 / CCUG 4856 / JCM 11019 / LMG 10263 / NCTC 9343 / Onslow / VPI 2553 / EN-2).